Reading from the N-terminus, the 419-residue chain is UDP-N-acetylglucosamine 1-carboxyvinyltransferase (419 aa).

22 to 23 (KN) contacts phosphoenolpyruvate. Arg93 contacts UDP-N-acetyl-alpha-D-glucosamine. Cys117 serves as the catalytic Proton donor. A 2-(S-cysteinyl)pyruvic acid O-phosphothioketal modification is found at Cys117. The UDP-N-acetyl-alpha-D-glucosamine site is built by Asp306 and Ile328.

This sequence belongs to the EPSP synthase family. MurA subfamily.

Its subcellular location is the cytoplasm. It catalyses the reaction phosphoenolpyruvate + UDP-N-acetyl-alpha-D-glucosamine = UDP-N-acetyl-3-O-(1-carboxyvinyl)-alpha-D-glucosamine + phosphate. Its pathway is cell wall biogenesis; peptidoglycan biosynthesis. Cell wall formation. Adds enolpyruvyl to UDP-N-acetylglucosamine. The protein is UDP-N-acetylglucosamine 1-carboxyvinyltransferase of Vesicomyosocius okutanii subsp. Calyptogena okutanii (strain HA).